A 466-amino-acid polypeptide reads, in one-letter code: Asparagine--tRNA ligase (466 aa).

This sequence belongs to the class-II aminoacyl-tRNA synthetase family. In terms of assembly, homodimer.

The protein resides in the cytoplasm. The enzyme catalyses tRNA(Asn) + L-asparagine + ATP = L-asparaginyl-tRNA(Asn) + AMP + diphosphate + H(+). This chain is Asparagine--tRNA ligase, found in Shewanella frigidimarina (strain NCIMB 400).